We begin with the raw amino-acid sequence, 310 residues long: CRAL-TRIO domain-containing protein YKL091C (310 aa).

The 174-residue stretch at 101–274 (ERIKLAKMYP…KYGGTSVLHN (174 aa)) folds into the CRAL-TRIO domain.

The polypeptide is CRAL-TRIO domain-containing protein YKL091C (Saccharomyces cerevisiae (strain ATCC 204508 / S288c) (Baker's yeast)).